A 4473-amino-acid chain; its full sequence is Plectin (4473 aa).

2 consecutive Calponin-homology (CH) domains span residues Asp1–Gln74 and Met87–Pro192. An actin-binding region spans residues Asp1–Pro192. Positions Asp1–Tyr1259 are globular 1. A Spectrin 1 repeat occupies Arg449–Leu508. Residue Ser509 is modified to Phosphoserine. Spectrin repeat units lie at residues Lys529 to His613 and Leu626 to Gln719. Position 604 is a phosphothreonine (Thr604). The SH3 domain occupies Arg730–Pro787. Ser836 bears the Phosphoserine mark. A Spectrin 4 repeat occupies Arg1104–Ala1204. At Ser1224 the chain carries Phosphoserine. Residues Gln1258–Ala2548 adopt a coiled-coil conformation. Positions Ile1260 to Thr2544 are central fibrous rod domain. 2 disordered regions span residues Glu1274–Ala1293 and Arg1407–Gln1434. At Ser1510 the chain carries Phosphoserine. Lys1514 is subject to N6-acetyllysine. Disordered stretches follow at residues Val1529–Arg1550, Ser1582–Ala1616, Ala1881–Gln1929, Leu1950–Lys1971, and Glu2003–Lys2098. 3 stretches are compositionally biased toward basic and acidic residues: residues Asp1587–Ala1616, Ala1881–Arg1897, and Glu1905–Gln1917. Residues Ala1959–Ala1968 are compositionally biased toward low complexity. Over residues Glu2003–Ala2047 the composition is skewed to basic and acidic residues. The segment covering Glu2048–Ala2061 has biased composition (low complexity). Positions Glu2062–Gln2077 are enriched in basic and acidic residues. Ser2420 is modified (phosphoserine). Lys2425 carries the post-translational modification N6-acetyllysine. The disordered stretch occupies residues Arg2457–Ala2476. The globular 2 stretch occupies residues Gln2545 to Ala4473. Phosphoserine occurs at positions 2563 and 2591. Plectin repeat units lie at residues Arg2615 to Ala2652, Leu2653 to His2690, His2691 to Ala2728, Ile2729 to Ser2766, and Ala2770 to Gly2804. Thr2675 carries the post-translational modification Phosphothreonine. Phosphotyrosine is present on Tyr2822. Residues Lys2842 and Lys2880 each carry the N6-acetyllysine modification. 5 Plectin repeats span residues Ala2905–Val2942, Arg2943–Ala2980, Val2981–His3018, Glu3019–Gly3056, and Leu3057–Asn3094. A Phosphotyrosine modification is found at Tyr3151. N6-acetyllysine is present on Lys3209. Plectin repeat units follow at residues Arg3274–Ala3311, Thr3312–His3349, Glu3350–Ala3387, Ile3388–Ser3425, and Ala3429–Gly3463. Residue Thr3574 is modified to Phosphothreonine. Tyr3579 carries the phosphotyrosine modification. Plectin repeat units follow at residues Trp3609–Ala3646, Arg3647–His3684, Asp3685–Ala3722, Leu3723–His3760, Ser3764–Gly3797, and Leu3800–Ala3834. Thr3819 carries the post-translational modification Phosphothreonine. Ser3843 carries the phosphoserine modification. Plectin repeat units follow at residues Gln3852–Ala3889, Phe3890–Lys3927, Asp3928–Gly3965, Ile3966–Asn4003, Thr4007–Gly4041, and Arg4043–Tyr4094. The tract at residues Gln4039 to Ile4089 is binding to intermediate filaments. Residues Ser4171, Ser4173, Ser4174, Ser4175, Ser4178, Ser4179, Ser4180, and Ser4181 each carry the phosphoserine modification. A Phosphotyrosine modification is found at Tyr4182. A phosphoserine mark is found at Ser4185, Ser4189, and Ser4195. Plectin repeat units lie at residues Ser4197–Gly4234, Gln4235–Val4272, Asp4273–Gly4310, Gln4311–Ala4348, and Gln4349–Gly4386. Thr4200 carries the phosphothreonine modification. Thr4328 is modified (phosphothreonine; by CDK1). Phosphoserine is present on residues Ser4396 and Ser4402. The segment covering Tyr4400–Gly4460 has biased composition (low complexity). Residues Tyr4400 to Ala4473 are disordered. Residue Tyr4404 is modified to Phosphotyrosine. Phosphoserine is present on residues Ser4405, Ser4407, and Ser4411. Thr4412 is modified (phosphothreonine). A 4 X 4 AA tandem repeats of G-S-R-X region spans residues Gly4414–Arg4429. Phosphoserine is present on Ser4415. Residues Arg4416 and Arg4429 each carry the omega-N-methylarginine modification. 2 positions are modified to phosphoserine: Ser4431 and Ser4464.

Belongs to the plakin or cytolinker family. In terms of assembly, homodimer or homotetramer. Interacts (via actin-binding domain) with SYNE3. Interacts (via calponin-homology (CH) 1 domain) with VIM (via rod region). Interacts (via N-terminus) with DST isoform 2 (via N-terminus). Interacts with FER. Interacts with TOR1A. Interacts with ANK3. Identified in complexes that contain VIM, EZR, AHNAK, BFSP1, BFSP2, ANK2, PLEC, PRX and spectrin. Post-translationally, phosphorylated by CDK1; regulates dissociation from intermediate filaments during mitosis.

The protein localises to the cytoplasm. It is found in the cytoskeleton. The protein resides in the cell junction. Its subcellular location is the hemidesmosome. It localises to the cell projection. The protein localises to the podosome. In terms of biological role, interlinks intermediate filaments with microtubules and microfilaments and anchors intermediate filaments to desmosomes or hemidesmosomes. May be involved not only in the cross-linking and stabilization of cytoskeletal intermediate filaments network, but also in the regulation of their dynamics. This chain is Plectin (PLEC), found in Cricetulus griseus (Chinese hamster).